A 474-amino-acid chain; its full sequence is Dipeptidase A (474 aa).

Residue C6 is part of the active site.

Belongs to the peptidase C69 family. As to quaternary structure, homooctamer.

It catalyses the reaction an L-aminoacyl-L-amino acid + H2O = 2 an L-alpha-amino acid. Inhibited by Zn(2+), Cu(2+), Ca(2+) and Cd(2+). Its function is as follows. Hydrolyzes a wide range of dipeptides but unable to hydrolyze dipeptides containing proline. Highest activity against Met-Ala. This chain is Dipeptidase A (pepDA), found in Lactobacillus helveticus (Lactobacillus suntoryeus).